Reading from the N-terminus, the 618-residue chain is Phostensin (618 aa).

Over residues 15-33 (RRQEEAAVRGREKAERERL) the composition is skewed to basic and acidic residues. A disordered region spans residues 15–505 (RRQEEAAVRG…PATADAAVPG (491 aa)). Ser54 is modified (phosphoserine). Over residues 96-109 (QQQQQQQQQQQQQQ) the composition is skewed to low complexity. Basic and acidic residues-rich tracts occupy residues 110-160 (RSEE…ERRL) and 173-197 (LESRDWRQSPGEAGDRSSRLSEVRK). A phosphoserine mark is found at Ser131, Ser139, Ser181, and Ser201. The residue at position 205 (Thr205) is a Phosphothreonine. Ser231 is modified (phosphoserine). 2 stretches are compositionally biased toward basic and acidic residues: residues 234-245 (DSDHEKLGLTDA) and 271-289 (SGEERKDCLEECGRKEERT). Residues 308–319 (EAAGSSSGGVEA) are compositionally biased toward low complexity. The segment covering 348-358 (KVRDRTPRDTE) has biased composition (basic and acidic residues). The span at 429–451 (RPPPAAPLSPPPPAPPAPQPPGD) shows a compositional bias: pro residues. Ser437 is modified (phosphoserine). Residue Lys462 is modified to N6-acetyllysine. The segment covering 485–505 (APPAAAATPATPATADAAVPG) has biased composition (low complexity). The residue at position 535 (Ser535) is a Phosphoserine. Residues 556-594 (YQYPSESSVLEELGPEPEAPSAPSPPAAQPDDEEDEEEL) are disordered. A compositionally biased stretch (pro residues) spans 572–583 (PEAPSAPSPPAA). Residues 585-594 (PDDEEDEEEL) are compositionally biased toward acidic residues.

In terms of assembly, interacts with Protein phosphatase 1 (PP1).

The protein localises to the cytoplasm. It localises to the cytoskeleton. May target protein phosphatase 1 to F-actin cytoskeleton. This chain is Phostensin (PPP1R18), found in Sus scrofa (Pig).